Consider the following 60-residue polypeptide: Putative mercuric resistance protein (60 aa).

In Pseudomonas aeruginosa, this protein is Putative mercuric resistance protein.